The following is a 213-amino-acid chain: Transcription antitermination protein NusB (213 aa).

This sequence belongs to the NusB family.

Functionally, involved in transcription antitermination. Required for transcription of ribosomal RNA (rRNA) genes. Binds specifically to the boxA antiterminator sequence of the ribosomal RNA (rrn) operons. The chain is Transcription antitermination protein NusB from Synechococcus elongatus (strain ATCC 33912 / PCC 7942 / FACHB-805) (Anacystis nidulans R2).